A 438-amino-acid polypeptide reads, in one-letter code: Transposon Ty2-C Gag polyprotein (438 aa).

Composition is skewed to polar residues over residues 1 to 11 (MESQQLHQNPR), 19 to 39 (ASVT…SASN), and 49 to 60 (KVNSQQETTPGT). Disordered regions lie at residues 1–88 (MESQ…YQQH), 365–397 (NVSR…AKAH), and 419–438 (SSQY…TERI). The segment at 295 to 397 (ENNINVSDRL…SSKPRAAKAH (103 aa)) is RNA-binding. Over residues 369–382 (TSPNTTNTKVTTRN) the composition is skewed to low complexity.

Homotrimer.

The protein localises to the cytoplasm. Its function is as follows. Capsid protein (CA) is the structural component of the virus-like particle (VLP), forming the shell that encapsulates the retrotransposons dimeric RNA genome. The particles are assembled from trimer-clustered units and there are holes in the capsid shells that allow for the diffusion of macromolecules. CA also has nucleocapsid-like chaperone activity, promoting primer tRNA(i)-Met annealing to the multipartite primer-binding site (PBS), dimerization of Ty2 RNA and initiation of reverse transcription. This Saccharomyces cerevisiae (strain ATCC 204508 / S288c) (Baker's yeast) protein is Transposon Ty2-C Gag polyprotein (TY2A-C).